The following is a 113-amino-acid chain: uncharacterized protein (113 aa).

An N-terminal signal peptide occupies residues Met1–Ala20.

This is an uncharacterized protein from Escherichia coli (strain K12).